We begin with the raw amino-acid sequence, 249 residues long: MSNQNKVLSLGLLLLAAVAAWYLWNKKNKKSGSQYVPASSIVEPFMPSLTYKVDKVYDASAPFGGQGNGDFMSVPGTFQSMVPPRFGMLDGAVVSVPTKNGSINPGIAPLYNNLDQDAMAFNPSSPLQQGIMDDNGEMIQPVVYDRIMYANRRSRLLEGSDFIRGDLPIFPQNLGWFSPSVQPHIDLRKGIVDNYDKDTADQLKLLQMKSEGRFDRAFEGEMVPPNTLIPSYGTFINPSVGDVEIVNFE.

The signal sequence occupies residues 1-20 (MSNQNKVLSLGLLLLAAVAA).

This sequence belongs to the IIV-6 117L family.

This is an uncharacterized protein from Acheta domesticus (House cricket).